A 551-amino-acid polypeptide reads, in one-letter code: Probable NADH-ubiquinone oxidoreductase C947.15c, mitochondrial (551 aa).

The transit peptide at 1-35 (MSVSKARLQSVVRLSRTVPYSKTMVRSFHVSCAVK) directs the protein to the mitochondrion. Position 92–122 (92–122 (NIVVLGSGWGAVAAIKNLDPSLYNITLVSPR)) interacts with FAD. 255-291 (LHITVVGGGPTGMEFAAEMQDFIDNDVKDMFPELQKD) provides a ligand contact to NAD(+).

This sequence belongs to the NADH dehydrogenase family.

Its subcellular location is the mitochondrion. It carries out the reaction a quinone + NADH + H(+) = a quinol + NAD(+). It catalyses the reaction a ubiquinone + NADH + H(+) = a ubiquinol + NAD(+). Its function is as follows. Catalyzes the oxidation of NADH. In Schizosaccharomyces pombe (strain 972 / ATCC 24843) (Fission yeast), this protein is Probable NADH-ubiquinone oxidoreductase C947.15c, mitochondrial.